Reading from the N-terminus, the 209-residue chain is C-type lectin domain family 6 member A (209 aa).

Residues 1–20 lie on the Cytoplasmic side of the membrane; it reads MMQEQQPQSTEKRGWLSLRL. A helical; Signal-anchor for type II membrane protein membrane pass occupies residues 21–41; sequence WSVAGISIALLSACFIVSCVV. Over 42 to 209 the chain is Extracellular; sequence TYHFTYGETG…SICEMNKIYL (168 aa). 4 cysteine pairs are disulfide-bonded: cysteine 66–cysteine 78, cysteine 79–cysteine 90, cysteine 107–cysteine 202, and cysteine 176–cysteine 194. A C-type lectin domain is found at 86 to 203; it reads FGSSCYFISS…CETRRNSICE (118 aa). Positions 116, 118, and 122 each coordinate Ca(2+). An N-linked (GlcNAc...) asparagine glycan is attached at asparagine 131. The Ca(2+) site is built by glutamate 168, asparagine 170, and glutamate 174. Alpha-D-mannopyranose is bound by residues 168–170, glutamate 174, tryptophan 182, 190–191, and arginine 198; these read EPN and ND. Asparagine 170 is a glycosylation site (N-linked (GlcNAc...) asparagine). Ca(2+) is bound by residues asparagine 190 and aspartate 191. Position 203 (glutamate 203) interacts with Ca(2+).

Associated with FCER1G. Heterodimer with CLEC4D; this heterodimer forms a pattern recognition receptor (PRR) against fungal infection. Expressed in lung, spleen, lymph node, leukocytes, bone marrow, tonsils and dendritic cells. Strongly expressed in purified monocytes and weakly in B-cells. In peripheral blood cells, preferentially expressed in plasmacytoids rather than myeloids.

It is found in the cell membrane. Its function is as follows. Calcium-dependent lectin that acts as a pattern recognition receptor (PRR) of the innate immune system: specifically recognizes and binds alpha-mannans on C.albicans hypheas. Binding of C.albicans alpha-mannans to this receptor complex leads to phosphorylation of the immunoreceptor tyrosine-based activation motif (ITAM) of FCER1G, triggering activation of SYK, CARD9 and NF-kappa-B, consequently driving maturation of antigen-presenting cells and shaping antigen-specific priming of T-cells toward effector T-helper 1 and T-helper 17 cell subtypes. Recognizes also, in a mannose-dependent manner, allergens from house dust mite and fungi, by promoting cysteinyl leukotriene production. Recognizes soluble elements from the eggs of Shistosoma mansoni altering adaptive immune responses. This Homo sapiens (Human) protein is C-type lectin domain family 6 member A.